The primary structure comprises 874 residues: Alanine--tRNA ligase (874 aa).

Residues His562, His566, Cys665, and His669 each contribute to the Zn(2+) site.

It belongs to the class-II aminoacyl-tRNA synthetase family. Requires Zn(2+) as cofactor.

It is found in the cytoplasm. It carries out the reaction tRNA(Ala) + L-alanine + ATP = L-alanyl-tRNA(Ala) + AMP + diphosphate. In terms of biological role, catalyzes the attachment of alanine to tRNA(Ala) in a two-step reaction: alanine is first activated by ATP to form Ala-AMP and then transferred to the acceptor end of tRNA(Ala). Also edits incorrectly charged Ser-tRNA(Ala) and Gly-tRNA(Ala) via its editing domain. The sequence is that of Alanine--tRNA ligase from Pseudomonas paraeruginosa (strain DSM 24068 / PA7) (Pseudomonas aeruginosa (strain PA7)).